Consider the following 346-residue polypeptide: Protease inhibitor Egf1.5b (346 aa).

An N-terminal signal peptide occupies residues Met1–Ala28. The 53-residue stretch at Cys52 to Cys104 folds into the TIL domain.

Belongs to the polydnaviridae EGF-like motif protein family. As to quaternary structure, interacts with host PAP1, PAP3 and SPH2.

Counteracts the host humoral immune response by inhibiting the processing and the amidolytic activity of host PAP1 and PAP3. Thereby, melanization of host hemolymph, normally producing several reactive intermediates toxic for viruses, is deregulated and proper immune response cannot occur. This chain is Protease inhibitor Egf1.5b (O5), found in Microplitis demolitor (Parasitoid wasp).